The primary structure comprises 136 residues: Ribosome-binding factor A (136 aa).

The segment at 116-136 (AGNHKASDEEESDDKGHEDEQ) is disordered.

The protein belongs to the RbfA family. Monomer. Binds 30S ribosomal subunits, but not 50S ribosomal subunits or 70S ribosomes.

It is found in the cytoplasm. One of several proteins that assist in the late maturation steps of the functional core of the 30S ribosomal subunit. Associates with free 30S ribosomal subunits (but not with 30S subunits that are part of 70S ribosomes or polysomes). Required for efficient processing of 16S rRNA. May interact with the 5'-terminal helix region of 16S rRNA. The protein is Ribosome-binding factor A of Lachnoclostridium phytofermentans (strain ATCC 700394 / DSM 18823 / ISDg) (Clostridium phytofermentans).